Consider the following 128-residue polypeptide: Fluoride-specific ion channel FluC (128 aa).

Helical transmembrane passes span 5–25 (IVAIFVGAGLGAVLRWFLGLA), 35–55 (LGTLAANLLGGYAIGIAAVVF), 67–87 (LFVITGFLGGLTTFSTYSVEV), and 96–116 (FGWAFAVAVLHLTGSFTLTAL). Residues G75 and T78 each contribute to the Na(+) site.

This sequence belongs to the fluoride channel Fluc/FEX (TC 1.A.43) family.

It is found in the cell inner membrane. The catalysed reaction is fluoride(in) = fluoride(out). Its activity is regulated as follows. Na(+) is not transported, but it plays an essential structural role and its presence is essential for fluoride channel function. Fluoride-specific ion channel. Important for reducing fluoride concentration in the cell, thus reducing its toxicity. This chain is Fluoride-specific ion channel FluC, found in Burkholderia vietnamiensis (strain G4 / LMG 22486) (Burkholderia cepacia (strain R1808)).